Consider the following 710-residue polypeptide: Polyribonucleotide nucleotidyltransferase (710 aa).

D489 and D495 together coordinate Mg(2+). The KH domain maps to 556–615; sequence PKIDTIKIDVDKIKVVIGKGGETIDKIIAETGVKIDIDDEGNVSIYSSDQAAIDRTKEII. The 69-residue stretch at 625-693 folds into the S1 motif domain; the sequence is GEVYHAKVIR…EKGRVDASMK (69 aa).

This sequence belongs to the polyribonucleotide nucleotidyltransferase family. The cofactor is Mg(2+).

The protein resides in the cytoplasm. It carries out the reaction RNA(n+1) + phosphate = RNA(n) + a ribonucleoside 5'-diphosphate. In terms of biological role, involved in mRNA degradation. Catalyzes the phosphorolysis of single-stranded polyribonucleotides processively in the 3'- to 5'-direction. The sequence is that of Polyribonucleotide nucleotidyltransferase from Streptococcus pyogenes serotype M3 (strain ATCC BAA-595 / MGAS315).